Reading from the N-terminus, the 239-residue chain is Ribosomal RNA small subunit methyltransferase G (239 aa).

S-adenosyl-L-methionine is bound by residues Gly77, Phe82, Ala128–Glu129, and Arg147.

It belongs to the methyltransferase superfamily. RNA methyltransferase RsmG family.

It is found in the cytoplasm. Its function is as follows. Specifically methylates the N7 position of guanine in position 535 of 16S rRNA. In Bacillus anthracis (strain A0248), this protein is Ribosomal RNA small subunit methyltransferase G.